We begin with the raw amino-acid sequence, 178 residues long: Probable chorismate pyruvate-lyase (178 aa).

Residues R72, L110, and E169 each contribute to the substrate site.

The protein belongs to the UbiC family.

The protein resides in the cytoplasm. The enzyme catalyses chorismate = 4-hydroxybenzoate + pyruvate. Its pathway is cofactor biosynthesis; ubiquinone biosynthesis. Its function is as follows. Removes the pyruvyl group from chorismate, with concomitant aromatization of the ring, to provide 4-hydroxybenzoate (4HB) for the ubiquinone pathway. This chain is Probable chorismate pyruvate-lyase, found in Nitrosomonas eutropha (strain DSM 101675 / C91 / Nm57).